A 371-amino-acid chain; its full sequence is Solute carrier family 35 member F6 (371 aa).

The first 25 residues, 1–25 (MAWTKHQLFLAGLMLVTGSINTLSA), serve as a signal peptide directing secretion. A run of 2 helical transmembrane segments spans residues 48–68 (FLQA…FYLL) and 89–109 (LLFL…YVAL). In terms of domain architecture, EamA spans 104-160 (LMYVALNMTSASSFQMLRGAVIIFTGLFSVAFLGRRLVLSQWLGILATIAGLVVVGL). The N-linked (GlcNAc...) asparagine glycan is linked to asparagine 110. The next 7 helical transmembrane spans lie at 117–137 (FQML…AFLG), 140–160 (LVLS…VVGL), 176–196 (VITG…QMVL), 216–236 (GLFG…IPAG), 261–281 (LIAV…FAGI), 295–312 (LDSL…ALGW), and 317–336 (ALQI…YNGL). The segment at 347–371 (GRPPAEESEQERLLGGSRTPINDAS) is disordered. At threonine 365 the chain carries Phosphothreonine.

This sequence belongs to the SLC35F solute transporter family. In terms of assembly, interacts with SLC25A5.

It localises to the mitochondrion. The protein localises to the lysosome membrane. Its function is as follows. Involved in the maintenance of mitochondrial membrane potential in pancreatic ductal adenocarcinoma (PDAC) cells. Promotes pancreatic ductal adenocarcinoma (PDAC) cell growth. May play a role as a nucleotide-sugar transporter. The sequence is that of Solute carrier family 35 member F6 (SLC35F6) from Pongo abelii (Sumatran orangutan).